Here is a 287-residue protein sequence, read N- to C-terminus: ATP synthase gamma chain (287 aa).

It belongs to the ATPase gamma chain family. In terms of assembly, F-type ATPases have 2 components, CF(1) - the catalytic core - and CF(0) - the membrane proton channel. CF(1) has five subunits: alpha(3), beta(3), gamma(1), delta(1), epsilon(1). CF(0) has three main subunits: a, b and c.

The protein localises to the cell inner membrane. Functionally, produces ATP from ADP in the presence of a proton gradient across the membrane. The gamma chain is believed to be important in regulating ATPase activity and the flow of protons through the CF(0) complex. The chain is ATP synthase gamma chain from Xylella fastidiosa (strain M23).